A 292-amino-acid chain; its full sequence is MERGPTVGAGLGAGTRVRALLGCLVKVLLWVASALLYFGSEQAARLLGSPCLRRLYHAWLAAVVIFGPLLQFHVNSRTIFASHGNFFNIKFVNSAWGWTCTFLGGFVLLVVFLATRRVAVTARHLSRLVVGAAVWRGAGRAFLLIEDLTGSCFEPLPQGLLLHELPDRKSCLAAGHQWRGYTVSSHTFLLTFCCLLMAEEAAVFAKYLAHGLPAGAPLRLVFLLNVLLLGLWNFLLLCTVIYFHQYTHKVVGAAVGTFAWYLTYGSWYHQPWSPGIPGHGLFPRSRSMRKHN.

Residues 1 to 18 lie on the Lumenal side of the membrane; it reads MERGPTVGAGLGAGTRVR. Residues 19–39 traverse the membrane as a helical segment; it reads ALLGCLVKVLLWVASALLYFG. The Cytoplasmic segment spans residues 40-54; it reads SEQAARLLGSPCLRR. A helical transmembrane segment spans residues 55-75; that stretch reads LYHAWLAAVVIFGPLLQFHVN. The Lumenal segment spans residues 76-94; sequence SRTIFASHGNFFNIKFVNS. A helical membrane pass occupies residues 95–115; sequence AWGWTCTFLGGFVLLVVFLAT. Topologically, residues 116–141 are cytoplasmic; the sequence is RRVAVTARHLSRLVVGAAVWRGAGRA. A helical transmembrane segment spans residues 142–162; sequence FLLIEDLTGSCFEPLPQGLLL. Residues 163–187 are Lumenal-facing; sequence HELPDRKSCLAAGHQWRGYTVSSHT. Histidine 186 is an active-site residue. The helical transmembrane segment at 188 to 208 threads the bilayer; it reads FLLTFCCLLMAEEAAVFAKYL. The Cytoplasmic segment spans residues 209-220; sequence AHGLPAGAPLRL. A helical transmembrane segment spans residues 221–241; sequence VFLLNVLLLGLWNFLLLCTVI. Over 242 to 249 the chain is Lumenal; sequence YFHQYTHK. Residue histidine 244 is part of the active site. The helical transmembrane segment at 250–270 threads the bilayer; that stretch reads VVGAAVGTFAWYLTYGSWYHQ. At 271–292 the chain is on the cytoplasmic side; sequence PWSPGIPGHGLFPRSRSMRKHN.

It belongs to the FIT family. FIT1 subfamily. In terms of tissue distribution, predominantly expressed in skeletal muscle and at lower levels in the heart (at protein level). In the heart, mRNA expression levels do not correlate well with protein levels, suggesting post-transcriptional regulation in this organ.

The protein localises to the endoplasmic reticulum membrane. Its function is as follows. Plays an important role in the formation of lipid droplets (LDs) which are storage organelles at the center of lipid and energy homeostasis. Directly binds to diacylglycerol (DAGs) and triacylglycerol. In Mus musculus (Mouse), this protein is Fat storage-inducing transmembrane protein 1.